The primary structure comprises 226 residues: 2-C-methyl-D-erythritol 4-phosphate cytidylyltransferase (226 aa).

This sequence belongs to the IspD/TarI cytidylyltransferase family. IspD subfamily.

The enzyme catalyses 2-C-methyl-D-erythritol 4-phosphate + CTP + H(+) = 4-CDP-2-C-methyl-D-erythritol + diphosphate. It functions in the pathway isoprenoid biosynthesis; isopentenyl diphosphate biosynthesis via DXP pathway; isopentenyl diphosphate from 1-deoxy-D-xylulose 5-phosphate: step 2/6. In terms of biological role, catalyzes the formation of 4-diphosphocytidyl-2-C-methyl-D-erythritol from CTP and 2-C-methyl-D-erythritol 4-phosphate (MEP). The sequence is that of 2-C-methyl-D-erythritol 4-phosphate cytidylyltransferase from Clostridium beijerinckii (strain ATCC 51743 / NCIMB 8052) (Clostridium acetobutylicum).